A 266-amino-acid polypeptide reads, in one-letter code: 3-methyl-2-oxobutanoate hydroxymethyltransferase 2 (266 aa).

2 residues coordinate Mg(2+): Asp45 and Asp84. 3-methyl-2-oxobutanoate-binding positions include 45–46 (DS), Asp84, and Lys112. Residue Glu114 participates in Mg(2+) binding. Catalysis depends on Glu181, which acts as the Proton acceptor.

Belongs to the PanB family. As to quaternary structure, homodecamer; pentamer of dimers. Requires Mg(2+) as cofactor.

Its subcellular location is the cytoplasm. The enzyme catalyses 3-methyl-2-oxobutanoate + (6R)-5,10-methylene-5,6,7,8-tetrahydrofolate + H2O = 2-dehydropantoate + (6S)-5,6,7,8-tetrahydrofolate. Its pathway is cofactor biosynthesis; (R)-pantothenate biosynthesis; (R)-pantoate from 3-methyl-2-oxobutanoate: step 1/2. Catalyzes the reversible reaction in which hydroxymethyl group from 5,10-methylenetetrahydrofolate is transferred onto alpha-ketoisovalerate to form ketopantoate. The protein is 3-methyl-2-oxobutanoate hydroxymethyltransferase 2 of Pseudomonas aeruginosa (strain ATCC 15692 / DSM 22644 / CIP 104116 / JCM 14847 / LMG 12228 / 1C / PRS 101 / PAO1).